The sequence spans 175 residues: Probable DNA-directed RNA polymerase subunit delta (175 aa).

The region spanning 14–81 (MALVEIAHEI…SDQTWGLRSW (68 aa)) is the HTH HARE-type domain. The interval 110-175 (LDLDEFEEVD…YDDEEEDRKD (66 aa)) is disordered.

It belongs to the RpoE family. In terms of assembly, RNAP is composed of a core of 2 alpha, a beta and a beta' subunits. The core is associated with a delta subunit and one of several sigma factors.

Functionally, participates in both the initiation and recycling phases of transcription. In the presence of the delta subunit, RNAP displays an increased specificity of transcription, a decreased affinity for nucleic acids, and an increased efficiency of RNA synthesis because of enhanced recycling. This chain is Probable DNA-directed RNA polymerase subunit delta, found in Bacillus velezensis (strain DSM 23117 / BGSC 10A6 / LMG 26770 / FZB42) (Bacillus amyloliquefaciens subsp. plantarum).